Reading from the N-terminus, the 523-residue chain is ATP-dependent RNA helicase DBP3 (523 aa).

The segment covering methionine 1 to lysine 21 has biased composition (basic and acidic residues). The disordered stretch occupies residues methionine 1–alanine 71. Over residues lysine 22–glutamate 48 the composition is skewed to basic residues. The segment covering lysine 49–glutamate 67 has biased composition (basic and acidic residues). Positions leucine 114–alanine 140 match the Q motif motif. The Helicase ATP-binding domain maps to tryptophan 143–valine 315. Alanine 156 to threonine 163 serves as a coordination point for ATP. Positions aspartate 262–aspartate 265 match the DEAD box motif. Positions lysine 344 to glycine 493 constitute a Helicase C-terminal domain.

The protein belongs to the DEAD box helicase family. DDX5/DBP2 subfamily.

It localises to the nucleus. The protein localises to the nucleolus. The enzyme catalyses ATP + H2O = ADP + phosphate + H(+). In terms of biological role, ATP-dependent RNA helicase required for 60S ribosomal subunit synthesis. Involved in efficient pre-rRNA processing, predominantly at site A3, which is necessary for the normal formation of 25S and 5.8S rRNAs. The polypeptide is ATP-dependent RNA helicase DBP3 (DBP3) (Saccharomyces cerevisiae (strain ATCC 204508 / S288c) (Baker's yeast)).